A 438-amino-acid chain; its full sequence is MELATRSQIPKEVADIFNAPSDDEEFVGFQDDVPMENLSESCGSLDSLELEKQNACLHSKYFTEELRRIFKEDTDSDNEDFEGFTESELNIGSNPELIESELSDGDKTHPMMSDEEDDDDEEEAAPRRGRQSTRSSFGLRVAFQFPTKKTAKTPDKNSPHLLGGKTDLRREKSCRQPKEKEDSASDAEDESRAESQETSDALLKRAMNIKENKAMLAQLLAELNSVPDFFPVRTPPSASRRRTPRRAFSEGQITRRVNPTRSARPPEKFALENFTFSATKLTEELYSFRRRKTISGGKCQKYRRHRISSFRSVKDITEEELENIAITVRDKVYDKVLGNTCHQCRQKTIDTKTVCRNQGCGGVRGQFCGPCLRNRYGEDVRTALLDPKWTCPPCRGICNCSYCRRRDGRCATGILIHLAKFYGYDNVKEYLESLQKQL.

The Integrase domain-binding motif 1 (IBM1) signature appears at 9–33 (IPKEVADIFNAPSDDEEFVGFQDDV). Serine 21 carries the post-translational modification Phosphoserine. A PSIP1-binding region spans residues 55-114 (ACLHSKYFTEELRRIFKEDTDSDNEDFEGFTESELNIGSNPELIESELSDGDKTHPMMSD). An Integrase domain-binding motif 2 (IBM2) motif is present at residues 62-88 (FTEELRRIFKEDTDSDNEDFEGFTESE). Positions 72 to 199 (EDTDSDNEDF…ESRAESQETS (128 aa)) are disordered. Threonine 74 carries the post-translational modification Phosphothreonine. Residues 74 to 85 (TDSDNEDFEGFT) are compositionally biased toward acidic residues. Serine 76 carries the phosphoserine modification. Residue threonine 85 is modified to Phosphothreonine. A phosphoserine mark is found at serine 100, serine 103, serine 113, serine 135, serine 136, serine 183, and serine 185. Positions 113 to 123 (SDEEDDDDEEE) are enriched in acidic residues. Residues 166–183 (TDLRREKSCRQPKEKEDS) are compositionally biased toward basic and acidic residues. The MYC-binding stretch occupies residues 201–223 (ALLKRAMNIKENKAMLAQLLAEL). Residues lysine 210 and lysine 213 each participate in a glycyl lysine isopeptide (Lys-Gly) (interchain with G-Cter in SUMO2) cross-link. Serine 249 is subject to Phosphoserine.

In terms of assembly, interacts with MYC. Interacts (via IBM motifs) with PSIP1 (via IBD domain); phosphorylation increases its affinity for PSIP1. Phosphorylation increases its interaction with PSIP1.

The protein localises to the cytoplasm. Its subcellular location is the nucleus. Plays a role in transcriptional regulation as a repressor that inhibits monoamine oxidase A (MAOA) activity and gene expression by binding to the promoter. Plays an important oncogenic role in mediating the full transforming effect of MYC in medulloblastoma cells. Involved in apoptotic signaling pathways; May act downstream of P38-kinase and BCL-2, but upstream of CASP3/caspase-3 as well as CCND1/cyclin D1 and E2F1. This is Cell division cycle-associated 7-like protein (Cdca7l) from Rattus norvegicus (Rat).